Here is a 461-residue protein sequence, read N- to C-terminus: Propionyl-CoA carboxylase regulator (461 aa).

The HTH cro/C1-type domain occupies 11-65; the sequence is LRELRVKLGLTQKVFAERLGASLPYLNQMENNHRPVSATVVLALAQEFGVDVTKL. Positions 22 to 41 form a DNA-binding region, H-T-H motif; the sequence is QKVFAERLGASLPYLNQMEN.

The protein belongs to the short-chain fatty acyl-CoA assimilation regulator (ScfR) family.

Its function is as follows. Transcriptional regulator that controls propionyl-CoA assimilation through the methylmalonyl-CoA pathway via regulation of pccB expression. The sequence is that of Propionyl-CoA carboxylase regulator from Cereibacter sphaeroides (strain ATCC 17023 / DSM 158 / JCM 6121 / CCUG 31486 / LMG 2827 / NBRC 12203 / NCIMB 8253 / ATH 2.4.1.) (Rhodobacter sphaeroides).